The following is a 197-amino-acid chain: Probable chorismate pyruvate-lyase (197 aa).

Arg66, Leu104, and Glu169 together coordinate substrate.

Belongs to the UbiC family.

The protein localises to the cytoplasm. It catalyses the reaction chorismate = 4-hydroxybenzoate + pyruvate. Its pathway is cofactor biosynthesis; ubiquinone biosynthesis. Removes the pyruvyl group from chorismate, with concomitant aromatization of the ring, to provide 4-hydroxybenzoate (4HB) for the ubiquinone pathway. The chain is Probable chorismate pyruvate-lyase from Albidiferax ferrireducens (strain ATCC BAA-621 / DSM 15236 / T118) (Rhodoferax ferrireducens).